We begin with the raw amino-acid sequence, 807 residues long: MHSSPTSTRKQASFAASASAQPRKSISFINPSKSSAGKGYAASNPNKLAVSRTMGFLTDMKPAEKLNVPSAKTVQVLDSKGVDVTPRPLYHPDPHAASAKPNKLLTSQEGSLGSDYISSYSLYQNTLNPSMLGQYTRSVLGSSSVSKSSISTTESMSEDLEDSSYKRDRLASFTDVRVLRSTAEAAISKEELEKTIEIILTETETLRFFDLPTVMFSTESEEAEKIIEKNKKYETLCRNRLGNDLYVERMMQTFNGAPKNKEVQCEKIILEEKGVVATTWDLYDSYNIPETLLAAKRSGYSSKGSLPAKDRDPKIQDSESSSLMDIENVILAKVQEDEEDNSEAILKSDKLHQDLFYMERVLMENVFQPKLAAYRQLPVYKEHEPEEPEETLQVENLKVAEDEPKKEDEEEVEMELELEIATEQSTIPANLERLWSFSCDLTKGLNVSSLSWNKANPDLLAVGYGNFGFREQKKGMACCWSIKNPMWPERIYQSSYGVTSVDFSNSSPNLLAVGYHNGTVAIYNVQSSHNIPVLDSSESPQKHLGPVWQVQWIEQDRGTTGDDKREILVSISADGRISKWIIRKGLDCHDLMRLKRTTATGGKKGGEKEKKGEALISRQAPGMCFAFHPKDTNIYLAGTEEGLIHKCSCSYNEQYLETYRGHKGPVYKVTWNPFCPDVFLSCSADWGVMIWHQDTVKPFLSFYPTTYVVYDVSWSPKSAYIFAAANENRVEIWDLQISTLDPLIVNVANPGIKFTTVLFAKETDCLLVGDSDGQVAVYELRNMPTASDTSRGDVINILLGPKTNHTG.

Composition is skewed to polar residues over residues 1–11 (MHSSPTSTRKQ) and 22–31 (PRKSISFINP). Disordered stretches follow at residues 1 to 44 (MHSS…AASN) and 300 to 320 (YSSK…DSES). A compositionally biased stretch (low complexity) spans 32-43 (SKSSAGKGYAAS). The segment covering 308–317 (AKDRDPKIQD) has biased composition (basic and acidic residues). WD repeat units follow at residues 493 to 533 (QSSY…NIPV), 542 to 590 (KHLG…DCHD), 617 to 657 (SRQA…QYLE), 661 to 701 (GHKG…PFLS), 704 to 743 (PTTY…LDPL), and 749 to 788 (NPGI…TASD).

As to quaternary structure, part of the multisubunit axonemal dynein complex formed at least of two heavy chains and a number of intermediate and light chains. Associated with axonemal dynein subunits such as, DNAH2, DNAI3, and DYNLT1. Interacts with DYNLT1. In terms of tissue distribution, highly expressed in tissues containing motile cilia, including the trachea, lung, oviduct, and testis.

The protein localises to the cytoplasm. It is found in the cytoskeleton. Its subcellular location is the flagellum axoneme. It localises to the cilium axoneme. The protein resides in the dynein axonemal particle. Plays a critical role in the assembly of axonemal dynein complex, thereby playing a role in ciliary motility. The polypeptide is Dynein axonemal intermediate chain 4 (Dnai4) (Mus musculus (Mouse)).